A 56-amino-acid chain; its full sequence is FAAVSVDCSEYPKPACTLEYVPICGSDNKTYGNKCNFCNAVVESNGTLTLSHFGKC.

The Kazal-like domain maps to 6–56; it reads VDCSEYPKPACTLEYVPICGSDNKTYGNKCNFCNAVVESNGTLTLSHFGKC. Intrachain disulfides connect cysteine 8–cysteine 38, cysteine 16–cysteine 35, and cysteine 24–cysteine 56. N-linked (GlcNAc...) asparagine glycosylation occurs at asparagine 45.

Its subcellular location is the secreted. This Cyrtonyx montezumae (Montezuma quail) protein is Ovomucoid.